Here is a 361-residue protein sequence, read N- to C-terminus: Chorismate synthase (361 aa).

Residues R48 and R54 each coordinate NADP(+). Residues 125 to 127 (RSS), 238 to 239 (NA), G278, 293 to 297 (KPTSS), and R319 contribute to the FMN site.

It belongs to the chorismate synthase family. Homotetramer. FMNH2 is required as a cofactor.

The enzyme catalyses 5-O-(1-carboxyvinyl)-3-phosphoshikimate = chorismate + phosphate. It functions in the pathway metabolic intermediate biosynthesis; chorismate biosynthesis; chorismate from D-erythrose 4-phosphate and phosphoenolpyruvate: step 7/7. Its function is as follows. Catalyzes the anti-1,4-elimination of the C-3 phosphate and the C-6 proR hydrogen from 5-enolpyruvylshikimate-3-phosphate (EPSP) to yield chorismate, which is the branch point compound that serves as the starting substrate for the three terminal pathways of aromatic amino acid biosynthesis. This reaction introduces a second double bond into the aromatic ring system. The polypeptide is Chorismate synthase (Escherichia coli (strain SE11)).